Reading from the N-terminus, the 234-residue chain is MQLRAFISVFASLACVNAAVIDHDQVVPFAQPTPTTTLQTLAVQYKPQIYIANGCHPYPAVDEDGNTSGGLKPTGSQSAGCKGSGYGSQIYGRAVAYEGVYAFMYSWYMPKDETLPGLGHRHDWEACVVWLDSLENPNVVALSASYHSTYLTYYPPDSDYLDGNSAKIEYSTSWVILDHLLSATSTSGETQDLIMWDQLTDAARTALEDTDFGDANVPFKDANFETKLANAYYT.

The signal sequence occupies residues 1–18 (MQLRAFISVFASLACVNA). N66 is a glycosylation site (N-linked (GlcNAc...) asparagine). Positions 102–112 (AFMYSWYMPKD) match the Conserved undecapeptide motif I motif. A Hepta-peptide GHRHDWE motif II motif is present at residues 119–125 (GHRHDWE).

This sequence belongs to the Necrosis inducing protein (NPP1) family.

Its subcellular location is the secreted. Secreted effector that contributes to virulence during infection by P.capsici. Induces distinct chlorosis at 3 days after inoculation of host C.annuum leaves, and all the chlorotic areas gradually turn brown and become moderately necrotic at 7 days after inoculation. Leads only to chlorotic areas, without necrosis at 7 days after non-host N.benthamiana leaves infection. Induces cell death in hot pepper. This is NLP effector protein 1 from Phytophthora capsici.